A 352-amino-acid polypeptide reads, in one-letter code: tRNA pseudouridine synthase D (352 aa).

The active-site Nucleophile is the aspartate 78. Residues 153 to 299 (GVPNYYGEQR…LDQDRRPLLL (147 aa)) form the TRUD domain.

Belongs to the pseudouridine synthase TruD family.

It catalyses the reaction uridine(13) in tRNA = pseudouridine(13) in tRNA. Its function is as follows. Responsible for synthesis of pseudouridine from uracil-13 in transfer RNAs. The sequence is that of tRNA pseudouridine synthase D from Aeromonas salmonicida (strain A449).